Consider the following 236-residue polypeptide: Small ribosomal subunit protein eS6 (236 aa).

2 positions are modified to phosphoserine: S232 and S233.

Belongs to the eukaryotic ribosomal protein eS6 family. In terms of processing, phosphorylated.

This Kluyveromyces lactis (strain ATCC 8585 / CBS 2359 / DSM 70799 / NBRC 1267 / NRRL Y-1140 / WM37) (Yeast) protein is Small ribosomal subunit protein eS6 (RPS6).